The following is an 81-amino-acid chain: Cytochrome c oxidase subunit 7B2, mitochondrial (81 aa).

A mitochondrion-targeting transit peptide spans 1 to 25 (MMFPLARNALSSLKIRSILQSMARQ). The Mitochondrial matrix segment spans residues 26 to 33 (SHVKHSPD). A helical membrane pass occupies residues 34–60 (FHDKYGNAVLASGTAFCVVAWVFTATQ). At 61-81 (IGIEWNLSPVGRVTPKEWKHQ) the chain is on the mitochondrial intermembrane side.

It belongs to the cytochrome c oxidase VIIb family. As to quaternary structure, component of the cytochrome c oxidase (complex IV, CIV), a multisubunit enzyme composed of 14 subunits. The complex is composed of a catalytic core of 3 subunits MT-CO1, MT-CO2 and MT-CO3, encoded in the mitochondrial DNA, and 11 supernumerary subunits COX4I, COX5A, COX5B, COX6A, COX6B, COX6C, COX7A, COX7B, COX7C, COX8 and NDUFA4, which are encoded in the nuclear genome. The complex exists as a monomer or a dimer and forms supercomplexes (SCs) in the inner mitochondrial membrane with NADH-ubiquinone oxidoreductase (complex I, CI) and ubiquinol-cytochrome c oxidoreductase (cytochrome b-c1 complex, complex III, CIII), resulting in different assemblies (supercomplex SCI(1)III(2)IV(1) and megacomplex MCI(2)III(2)IV(2)).

It is found in the mitochondrion inner membrane. It functions in the pathway energy metabolism; oxidative phosphorylation. Component of the cytochrome c oxidase, the last enzyme in the mitochondrial electron transport chain which drives oxidative phosphorylation. The respiratory chain contains 3 multisubunit complexes succinate dehydrogenase (complex II, CII), ubiquinol-cytochrome c oxidoreductase (cytochrome b-c1 complex, complex III, CIII) and cytochrome c oxidase (complex IV, CIV), that cooperate to transfer electrons derived from NADH and succinate to molecular oxygen, creating an electrochemical gradient over the inner membrane that drives transmembrane transport and the ATP synthase. Cytochrome c oxidase is the component of the respiratory chain that catalyzes the reduction of oxygen to water. Electrons originating from reduced cytochrome c in the intermembrane space (IMS) are transferred via the dinuclear copper A center (CU(A)) of subunit 2 and heme A of subunit 1 to the active site in subunit 1, a binuclear center (BNC) formed by heme A3 and copper B (CU(B)). The BNC reduces molecular oxygen to 2 water molecules using 4 electrons from cytochrome c in the IMS and 4 protons from the mitochondrial matrix. In Macaca fascicularis (Crab-eating macaque), this protein is Cytochrome c oxidase subunit 7B2, mitochondrial (COX7B2).